A 278-amino-acid polypeptide reads, in one-letter code: Secoisolariciresinol dehydrogenase (278 aa).

NAD(+)-binding positions include 23 to 28 (GGAGGI), Asp-47, Val-73, and Asn-99. Residues Ser-104 and Ser-164 each contribute to the substrate site. Residue Tyr-167 is the Proton donor/acceptor of the active site. 2 residues coordinate NAD(+): Lys-171 and Val-200.

This sequence belongs to the short-chain dehydrogenases/reductases (SDR) family. Homotetramer.

The catalysed reaction is (-)-secoisolariciresinol + 2 NAD(+) = (-)-matairesinol + 2 NADH + 2 H(+). Its function is as follows. Oxidoreductase involved in lignan biosynthesis. Catalyzes the stereospecific conversion of (-)-secoisolariciresinol to (-)-matairesinol via a lactol intermediate. This Podophyllum peltatum (American mandrake) protein is Secoisolariciresinol dehydrogenase.